Consider the following 388-residue polypeptide: ATP phosphoribosyltransferase regulatory subunit (388 aa).

It belongs to the class-II aminoacyl-tRNA synthetase family. HisZ subfamily. Heteromultimer composed of HisG and HisZ subunits.

It localises to the cytoplasm. Its pathway is amino-acid biosynthesis; L-histidine biosynthesis; L-histidine from 5-phospho-alpha-D-ribose 1-diphosphate: step 1/9. In terms of biological role, required for the first step of histidine biosynthesis. May allow the feedback regulation of ATP phosphoribosyltransferase activity by histidine. The sequence is that of ATP phosphoribosyltransferase regulatory subunit from Acinetobacter baumannii (strain AB307-0294).